We begin with the raw amino-acid sequence, 95 residues long: Aspartyl/glutamyl-tRNA(Asn/Gln) amidotransferase subunit C (95 aa).

Belongs to the GatC family. In terms of assembly, heterotrimer of A, B and C subunits.

The catalysed reaction is L-glutamyl-tRNA(Gln) + L-glutamine + ATP + H2O = L-glutaminyl-tRNA(Gln) + L-glutamate + ADP + phosphate + H(+). The enzyme catalyses L-aspartyl-tRNA(Asn) + L-glutamine + ATP + H2O = L-asparaginyl-tRNA(Asn) + L-glutamate + ADP + phosphate + 2 H(+). Functionally, allows the formation of correctly charged Asn-tRNA(Asn) or Gln-tRNA(Gln) through the transamidation of misacylated Asp-tRNA(Asn) or Glu-tRNA(Gln) in organisms which lack either or both of asparaginyl-tRNA or glutaminyl-tRNA synthetases. The reaction takes place in the presence of glutamine and ATP through an activated phospho-Asp-tRNA(Asn) or phospho-Glu-tRNA(Gln). In Pseudomonas fluorescens (strain SBW25), this protein is Aspartyl/glutamyl-tRNA(Asn/Gln) amidotransferase subunit C.